Consider the following 319-residue polypeptide: Acetyl-coenzyme A carboxylase carboxyl transferase subunit alpha (319 aa).

The CoA carboxyltransferase C-terminal domain occupies 35 to 296 (NIDEEVHRLR…KAQLLEDLAD (262 aa)).

It belongs to the AccA family. In terms of assembly, acetyl-CoA carboxylase is a heterohexamer composed of biotin carboxyl carrier protein (AccB), biotin carboxylase (AccC) and two subunits each of ACCase subunit alpha (AccA) and ACCase subunit beta (AccD).

Its subcellular location is the cytoplasm. The enzyme catalyses N(6)-carboxybiotinyl-L-lysyl-[protein] + acetyl-CoA = N(6)-biotinyl-L-lysyl-[protein] + malonyl-CoA. The protein operates within lipid metabolism; malonyl-CoA biosynthesis; malonyl-CoA from acetyl-CoA: step 1/1. Its function is as follows. Component of the acetyl coenzyme A carboxylase (ACC) complex. First, biotin carboxylase catalyzes the carboxylation of biotin on its carrier protein (BCCP) and then the CO(2) group is transferred by the carboxyltransferase to acetyl-CoA to form malonyl-CoA. In Salmonella agona (strain SL483), this protein is Acetyl-coenzyme A carboxylase carboxyl transferase subunit alpha.